The sequence spans 215 residues: Transmembrane emp24 domain-containing protein 11 (215 aa).

A signal peptide spans 1–17 (MQIQTILLCFSFSFSAA). Residues 18 to 167 (FYFHAGEREE…ILKEQDYQRD (150 aa)) are Lumenal-facing. The region spanning 27 to 125 (EKCIIEDIPS…KLRIHLDIRV (99 aa)) is the GOLD domain. N-linked (GlcNAc...) asparagine glycosylation is present at N105. Residues 136-171 (QAKDKVNEVTFKLQHLIEQVEQILKEQDYQRDREEN) are a coiled coil. The helical transmembrane segment at 168 to 185 (REENFRITSEDTNRNVLW) threads the bilayer. Residues 186–215 (WAFAQILIFISVGIFQMKHLKDFFIAKKLV) lie on the Cytoplasmic side of the membrane. Residues 208 to 209 (FF) carry the COPII vesicle coat-binding motif. Residues 208 to 215 (FFIAKKLV) carry the COPI vesicle coat-binding motif.

Belongs to the EMP24/GP25L family.

The protein localises to the endoplasmic reticulum membrane. Its function is as follows. Part of a complex whose function is to bind Ca(2+) to the ER membrane and thereby regulate the retention of ER resident proteins. The polypeptide is Transmembrane emp24 domain-containing protein 11 (Tmed11) (Mus musculus (Mouse)).